We begin with the raw amino-acid sequence, 394 residues long: [Pyruvate dehydrogenase (acetyl-transferring)] kinase 1, mitochondrial (394 aa).

The N-terminal 20 residues, 1–20 (MWKIMRSWKCGGMRWAHRQR), are a transit peptide targeting the mitochondrion. The 261-residue stretch at 126–386 (AYPYELHNPP…DVYIKLKGPS (261 aa)) folds into the Histidine kinase domain. His148 is modified (phosphohistidine; by autocatalysis). ATP contacts are provided by residues 267–274 (EVFKNAFE), Asp304, 323–324 (ST), and 347–352 (GMGFGL).

It belongs to the PDK/BCKDK protein kinase family. In terms of assembly, interacts with PKP2.

The protein resides in the mitochondrion matrix. It catalyses the reaction L-seryl-[pyruvate dehydrogenase E1 alpha subunit] + ATP = O-phospho-L-seryl-[pyruvate dehydrogenase E1 alpha subunit] + ADP + H(+). Inhibits the mitochondrial pyruvate dehydrogenase complex by phosphorylation of the E1 alpha subunit (PDA1), thus contributing to the regulation of glucose metabolism. Also involved in telomere maintenance. This is [Pyruvate dehydrogenase (acetyl-transferring)] kinase 1, mitochondrial from Saccharomyces cerevisiae (strain ATCC 204508 / S288c) (Baker's yeast).